The following is a 629-amino-acid chain: Dapper homolog 3 (629 aa).

The residue at position 6 (Ser-6) is a Phosphoserine. Disordered regions lie at residues 50-76 (PGMGGAEAEDEEDADEDEDAAAARRAA) and 105-574 (GGLE…GGLV). The segment covering 56 to 69 (EAEDEEDADEDEDA) has biased composition (acidic residues). A coiled-coil region spans residues 63–87 (ADEDEDAAAARRAAAALEEQLEALP). A compositionally biased stretch (low complexity) spans 105–150 (GGLEQESGRSSGFYEDPSSTGGPDSPPSTFCGDSGFSGSSSYGRLG). Phosphoserine is present on residues Ser-165 and Ser-239. The residue at position 258 (Arg-258) is an Omega-N-methylarginine. Over residues 301 to 311 (PAREPSLERVG) the composition is skewed to basic and acidic residues. Low complexity predominate over residues 316–335 (SPAALSRAWASSWESEAAPE). The span at 336 to 348 (PAAPPAAPSPPDS) shows a compositional bias: pro residues. Phosphoserine is present on residues Ser-426 and Ser-478. The segment covering 525–535 (SAGRLGPLGRR) has biased composition (low complexity). Residues 536-546 (GPAGGVGGGYG) are compositionally biased toward gly residues. Residues 547–568 (ESESSASEGESPAFSSASSDSD) are compositionally biased toward low complexity. The PDZ-binding signature appears at 626–629 (MTTV).

Belongs to the dapper family. Can form homodimers and heterodimers with DACT1 or DACT3. Interacts with CSNK1D, PKA catalytic subunit, PKC-type kinase, DVL1, DVL3, VANGL1, VANGL2 and CTNND1. Interacts with DVL2.

May be involved in regulation of intracellular signaling pathways during development. Specifically thought to play a role in canonical and/or non-canonical Wnt signaling pathways through interaction with DSH (Dishevelled) family proteins. This chain is Dapper homolog 3 (DACT3), found in Homo sapiens (Human).